The following is a 394-amino-acid chain: NAD(P)H-quinone oxidoreductase subunit H (394 aa).

It belongs to the complex I 49 kDa subunit family. In terms of assembly, NDH-1 can be composed of about 15 different subunits; different subcomplexes with different compositions have been identified which probably have different functions.

It is found in the cellular thylakoid membrane. The enzyme catalyses a plastoquinone + NADH + (n+1) H(+)(in) = a plastoquinol + NAD(+) + n H(+)(out). The catalysed reaction is a plastoquinone + NADPH + (n+1) H(+)(in) = a plastoquinol + NADP(+) + n H(+)(out). Its function is as follows. NDH-1 shuttles electrons from an unknown electron donor, via FMN and iron-sulfur (Fe-S) centers, to quinones in the respiratory and/or the photosynthetic chain. The immediate electron acceptor for the enzyme in this species is believed to be plastoquinone. Couples the redox reaction to proton translocation, and thus conserves the redox energy in a proton gradient. Cyanobacterial NDH-1 also plays a role in inorganic carbon-concentration. The chain is NAD(P)H-quinone oxidoreductase subunit H from Synechococcus sp. (strain ATCC 27144 / PCC 6301 / SAUG 1402/1) (Anacystis nidulans).